We begin with the raw amino-acid sequence, 171 residues long: Translation initiation factor IF-3 (171 aa).

Belongs to the IF-3 family. As to quaternary structure, monomer.

It localises to the cytoplasm. Its function is as follows. IF-3 binds to the 30S ribosomal subunit and shifts the equilibrium between 70S ribosomes and their 50S and 30S subunits in favor of the free subunits, thus enhancing the availability of 30S subunits on which protein synthesis initiation begins. In Halalkalibacterium halodurans (strain ATCC BAA-125 / DSM 18197 / FERM 7344 / JCM 9153 / C-125) (Bacillus halodurans), this protein is Translation initiation factor IF-3.